Consider the following 325-residue polypeptide: Helicase VP6-A (325 aa).

2 disordered regions span residues 1–122 (MLLA…GATG) and 185–230 (DLRR…EPAR). Basic and acidic residues-rich tracts occupy residues 8–18 (VIKRSSEELKQ), 32–54 (EGGKEDKTEPKEESKAEGSKDGE), 61–79 (GQKEEGGKETKDADVDRRI), and 92–105 (LGERANENADRGDG). Residue K106 coordinates ATP. The segment covering 106–122 (KVGGGGGDADAGVGATG) has biased composition (gly residues). Basic and acidic residues-rich tracts occupy residues 185 to 203 (DLRRKEKNGTHAKAVERGG) and 211 to 229 (HGDAQREGVEEEKTSEEPA).

It belongs to the orbivirus VP6 family. Homohexamer.

It is found in the virion. The enzyme catalyses ATP + H2O = ADP + phosphate + H(+). Functionally, ATP dependent RNA helicase essential for RNA packaging and viral transcription. Possesses ss- and dsRNA-binding capacity. The sequence is that of Helicase VP6-A (Segment-9) from Bluetongue virus 17 (isolate USA) (BTV 17).